The chain runs to 304 residues: Myelin basic protein (304 aa).

2 stretches are compositionally biased toward basic and acidic residues: residues 1-12 (MGNHAGKRELNA) and 22-32 (NRGESEKKRNL). A disordered region spans residues 1-146 (MGNHAGKREL…QKRPSQRHGS (146 aa)). G2 carries the N-acetylalanine modification. Polar residues predominate over residues 51–65 (ANQNNGTSSQDTAVT). Residues 95 to 113 (FSRDAPGREDNTFKDRPSE) are compositionally biased toward basic and acidic residues. S96 carries the phosphoserine modification. Residues 117–130 (LQTIQEDSAATSES) are compositionally biased toward polar residues. A phosphoserine mark is found at S141 and S146. Y148 bears the Phosphotyrosine mark. T151 is modified (phosphothreonine). S153 bears the Phosphoserine mark. The residue at position 154 (T154) is a Phosphothreonine. Citrulline; in form C8 occurs at positions 159 and 165. R167 is modified (citrulline). T169 is modified (phosphothreonine). Position 174 is a phosphoserine (S174). Omega-N-methylarginine occurs at positions 177 and 183. The tract at residues 179-222 (FGGDRGAPKRGSGKDSHHPARTAHYGSLPQKSHGRTQDENPVVH) is induces experimental autoimmune encephalomyelitis (EAE) 1. A disordered region spans residues 180–249 (GGDRGAPKRG…GRGLSLSRFS (70 aa)). S190 bears the Phosphoserine mark. R199 is modified (citrulline). Y203 is subject to Phosphotyrosine. At S210 the chain carries Phosphoserine. 2 positions are modified to phosphothreonine: T214 and T229. R231 is modified (citrulline). Position 232 is a phosphothreonine (T232). Position 237 is a deamidated glutamine (Q237). R241 bears the Omega-N-methylarginine; alternate mark. The residue at position 241 (R241) is a Symmetric dimethylarginine; alternate. An induces experimental autoimmune encephalomyelitis (EAE) 2 region spans residues 246-256 (SRFSWGAEGQR). Phosphoserine is present on S249. 2 positions are modified to citrulline; in form C8: R256 and R264. Position 281 is a deamidated glutamine (Q281). Citrulline; in form C8 is present on R293. Phosphoserine is present on S295. R296 bears the Citrulline mark. S299 carries the post-translational modification Phosphoserine; by UHMK1. Position 303 is a citrulline (R303). Position 304 is a citrulline; in form C8 (R304).

It belongs to the myelin basic protein family. As to quaternary structure, homodimer. Isoform 3 exists as a homodimer. In terms of processing, several charge isomers of MBP; C1 (the most cationic, least modified, and most abundant form), C2, C3, C4, C5, C6, C7, C8-A and C8-B (the least cationic form); are produced as a result of optional PTM, such as phosphorylation, deamidation of glutamine or asparagine, arginine citrullination and methylation. C8-A and C8-B contain each two mass isoforms termed C8-A(H), C8-A(L), C8-B(H) and C8-B(L), (H) standing for higher and (L) for lower molecular weight. C3, C4 and C5 are phosphorylated. The ratio of methylated arginine residues decreases during aging, making the protein more cationic. Post-translationally, the N-terminal alanine is acetylated (isoform 3, isoform 4, isoform 5 and isoform 6). Arg-241 was found to be 6% monomethylated and 60% symmetrically dimethylated. In terms of processing, proteolytically cleaved in B cell lysosomes by cathepsin CTSG which degrades the major immunogenic MBP epitope and prevents the activation of MBP-specific autoreactive T cells. Post-translationally, phosphorylated by TAOK2, VRK2, MAPK11, MAPK12, MAPK14 and MINK1. In terms of tissue distribution, MBP isoforms are found in both the central and the peripheral nervous system, whereas Golli-MBP isoforms are expressed in fetal thymus, spleen and spinal cord, as well as in cell lines derived from the immune system.

It is found in the myelin membrane. Its subcellular location is the nucleus. In terms of biological role, the classic group of MBP isoforms (isoform 4-isoform 14) are with PLP the most abundant protein components of the myelin membrane in the CNS. They have a role in both its formation and stabilization. The smaller isoforms might have an important role in remyelination of denuded axons in multiple sclerosis. The non-classic group of MBP isoforms (isoform 1-isoform 3/Golli-MBPs) may preferentially have a role in the early developing brain long before myelination, maybe as components of transcriptional complexes, and may also be involved in signaling pathways in T-cells and neural cells. Differential splicing events combined with optional post-translational modifications give a wide spectrum of isomers, with each of them potentially having a specialized function. Induces T-cell proliferation. This Homo sapiens (Human) protein is Myelin basic protein (MBP).